The sequence spans 725 residues: N-alpha-acetyltransferase 35, NatC auxiliary subunit (725 aa).

Phosphoserine is present on Ser187. The interval 548–573 (ERIMEEQQKGRSSKKTKKKKKVRPLS) is disordered. A compositionally biased stretch (basic residues) spans 558-571 (RSSKKTKKKKKVRP).

This sequence belongs to the MAK10 family. In terms of assembly, component of the N-terminal acetyltransferase C (NatC) complex, which is composed of NAA35, NAA38 and NAA30.

Its subcellular location is the cytoplasm. Functionally, auxillary component of the N-terminal acetyltransferase C (NatC) complex which catalyzes acetylation of N-terminal methionine residues. N-terminal acetylation protects proteins from ubiquitination and degradation by the N-end rule pathway. Involved in regulation of apoptosis and proliferation of smooth muscle cells. The polypeptide is N-alpha-acetyltransferase 35, NatC auxiliary subunit (NAA35) (Macaca fascicularis (Crab-eating macaque)).